A 511-amino-acid polypeptide reads, in one-letter code: Glucan endo-1,3-beta-glucosidase 1 (511 aa).

The N-terminal stretch at 1–28 (MAFTSMVSTVPVLFFFFTLLLISANSSS) is a signal peptide. The N-linked (GlcNAc...) asparagine glycan is linked to Asn-109. Residue Glu-137 is the Proton donor of the active site. Asn-192 and Asn-274 each carry an N-linked (GlcNAc...) asparagine glycan. Catalysis depends on Glu-284, which acts as the Nucleophile. N-linked (GlcNAc...) asparagine glycosylation is found at Asn-374, Asn-378, Asn-407, Asn-473, and Asn-480. An intrachain disulfide couples Cys-382 to Cys-445. Ala-485 is lipidated: GPI-anchor amidated alanine. The propeptide at 486–511 (AGEATSRSLSRGFCVTIMILVTFSIL) is removed in mature form.

The protein belongs to the glycosyl hydrolase 17 family. Post-translationally, contains two additional disulfide bonds.

The protein resides in the cell membrane. It catalyses the reaction Hydrolysis of (1-&gt;3)-beta-D-glucosidic linkages in (1-&gt;3)-beta-D-glucans.. This chain is Glucan endo-1,3-beta-glucosidase 1, found in Arabidopsis thaliana (Mouse-ear cress).